A 560-amino-acid polypeptide reads, in one-letter code: Putative transport protein VIBHAR_02636 (560 aa).

The next 5 helical transmembrane spans lie at 8–28 (LLEQ…LAFG), 37–57 (LGNS…GFSF), 66–86 (FMLF…GIFF), 91–111 (HYFI…YFCS), and 164–184 (VGYA…AKLL). RCK C-terminal domains follow at residues 205–292 (LGNS…FRNG) and 293–376 (KEVF…KIGF). Helical transmembrane passes span 386–406 (LLAF…TMTF), 409–429 (VSFS…LGFL), 450–470 (LGLM…IFEH), 478–498 (IIGL…LVGA), 505–525 (SALL…MDVV), and 539–559 (AGTY…LIIL).

It belongs to the AAE transporter (TC 2.A.81) family. YbjL subfamily.

The protein localises to the cell membrane. This Vibrio campbellii (strain ATCC BAA-1116) protein is Putative transport protein VIBHAR_02636.